The sequence spans 391 residues: B2 bradykinin receptor (391 aa).

Residues 1-60 (MFSPWKISMFLSVREDSVPTTASFSADMLNVTLQGPTLNGTFAQSKCPQVEWLGWLNTIQ) are Extracellular-facing. N30 and N39 each carry an N-linked (GlcNAc...) asparagine glycan. The helical transmembrane segment at 61 to 84 (PPFLWVLFVLATLENIFVLSVFCL) threads the bilayer. The Cytoplasmic segment spans residues 85-93 (HKSSCTVAE). Residues 94–118 (IYLGNLAAADLILACGLPFWAITIS) form a helical membrane-spanning segment. The Extracellular segment spans residues 119-131 (NNFDWLFGETLCR). An intrachain disulfide couples C130 to C211. A helical membrane pass occupies residues 132 to 153 (VVNAIISMNLYSSICFLMLVSI). The Cytoplasmic portion of the chain corresponds to 154 to 175 (DRYLALVKTMSMGRMRGVRWAK). Y156 is subject to Phosphotyrosine. A helical membrane pass occupies residues 176-198 (LYSLVIWGCTLLLSSPMLVFRTM). Topologically, residues 199–221 (KEYSDEGHNVTACVISYPSLIWE) are extracellular. Residue N207 is glycosylated (N-linked (GlcNAc...) asparagine). A helical transmembrane segment spans residues 222 to 248 (VFTNMLLNVVGFLLPLSVITFCTMQIM). Topologically, residues 249–267 (QVLRNNEMQKFKEIQTERR) are cytoplasmic. Residues 268-292 (ATVLVLVVLLLFIICWLPFQISTFL) form a helical membrane-spanning segment. The Extracellular portion of the chain corresponds to 293–311 (DTLHRLGILSSCQDERIID). The helical transmembrane segment at 312–335 (VITQIASFMAYSNSCLNPLVYVIV) threads the bilayer. The Cytoplasmic portion of the chain corresponds to 336 to 391 (GKRFRKKSWEVYQGVCQKGGCRSEPIQMENSMGTLRTSISVERQIHKLQDWAGSRQ). Y347 carries the post-translational modification Phosphotyrosine. A lipid anchor (S-palmitoyl cysteine) is attached at C351. Residue S366 is modified to Phosphoserine. Residue T369 is modified to Phosphothreonine. A phosphoserine; by GRK6 mark is found at S373 and S375.

Belongs to the G-protein coupled receptor 1 family. Bradykinin receptor subfamily. BDKRB2 sub-subfamily. As to quaternary structure, forms a complex with PECAM1 and GNAQ. Interacts with PECAM1. Ubiquitous. Widespread in normal smooth muscle tissue and neurons.

It localises to the cell membrane. Receptor for bradykinin. It is associated with G proteins that activate a phosphatidylinositol-calcium second messenger system. This is B2 bradykinin receptor (BDKRB2) from Homo sapiens (Human).